The primary structure comprises 256 residues: Putative transposase for insertion sequence element IS112 (256 aa).

Belongs to the transposase 11 family.

Its function is as follows. Involved in the transposition of the insertion sequence IS112 which inactivates the SalI restriction-modification system. The chain is Putative transposase for insertion sequence element IS112 from Streptomyces albus G.